A 395-amino-acid polypeptide reads, in one-letter code: Elongation factor Tu (395 aa).

The region spanning 10-204 is the tr-type G domain; that stretch reads KEHANIGTIG…AVDDFIPTPE (195 aa). A G1 region spans residues 19–26; sequence GHVDHGKT. Residue 19–26 coordinates GTP; that stretch reads GHVDHGKT. Position 26 (T26) interacts with Mg(2+). The interval 60–64 is G2; that stretch reads GITIN. The G3 stretch occupies residues 81 to 84; it reads DCPG. Residues 81–85 and 136–139 contribute to the GTP site; these read DCPGH and NKVD. Positions 136-139 are G4; sequence NKVD. The tract at residues 174–176 is G5; that stretch reads SAL.

It belongs to the TRAFAC class translation factor GTPase superfamily. Classic translation factor GTPase family. EF-Tu/EF-1A subfamily. As to quaternary structure, monomer.

Its subcellular location is the cytoplasm. It catalyses the reaction GTP + H2O = GDP + phosphate + H(+). In terms of biological role, GTP hydrolase that promotes the GTP-dependent binding of aminoacyl-tRNA to the A-site of ribosomes during protein biosynthesis. This chain is Elongation factor Tu, found in Staphylococcus saprophyticus subsp. saprophyticus (strain ATCC 15305 / DSM 20229 / NCIMB 8711 / NCTC 7292 / S-41).